A 265-amino-acid polypeptide reads, in one-letter code: Glutamate racemase (265 aa).

Residues 12–13 and 44–45 contribute to the substrate site; these read DS and YG. Cys-75 functions as the Proton donor/acceptor in the catalytic mechanism. 76–77 contacts substrate; that stretch reads NT. Residue Cys-186 is the Proton donor/acceptor of the active site. 187–188 lines the substrate pocket; sequence TH.

It belongs to the aspartate/glutamate racemases family.

It carries out the reaction L-glutamate = D-glutamate. Its pathway is cell wall biogenesis; peptidoglycan biosynthesis. Functionally, provides the (R)-glutamate required for cell wall biosynthesis. The chain is Glutamate racemase from Pseudomonas paraeruginosa (strain DSM 24068 / PA7) (Pseudomonas aeruginosa (strain PA7)).